Here is a 135-residue protein sequence, read N- to C-terminus: QECKCHGVSGSCTTKTCWTTLPKFRELGFIVKDKYKEAVQVEPVRASRNKRPTFLKIKKPLSYRKPMDTDLVYIEKSPNYCEEDPMTGSMGTQGRLCNKTAQHTSGCDLMCCGRGYNTHQYSRVWQFHWCCCNCK.

2 disulfides stabilise this stretch: C3-C17 and C5-C12. S9 carries the O-palmitoleoyl serine; by PORCN lipid modification. Residues 41–69 (VEPVRASRNKRPTFLKIKKPLSYRKPMDT) form a disordered linker region. 4 disulfide bridges follow: C81–C112, C97–C107, C111–C134, and C130–C131. The N-linked (GlcNAc...) asparagine glycan is linked to N98.

Belongs to the Wnt family. Palmitoleoylation is required for efficient binding to frizzled receptors. Depalmitoleoylation leads to Wnt signaling pathway inhibition. In terms of tissue distribution, in embryo, in brain and ventral neural tube; in adults, in brain.

It is found in the secreted. The protein resides in the extracellular space. Its subcellular location is the extracellular matrix. Its function is as follows. Ligand for members of the frizzled family of seven transmembrane receptors that functions in the canonical Wnt/beta-catenin signaling pathway. Plays an important role in embryonic development, including dorsal versus ventral patterning during limb development, skeleton development and urogenital tract development. Required for central nervous system (CNS) angiogenesis and blood-brain barrier regulation. This Xenopus laevis (African clawed frog) protein is Protein Wnt-7a (wnt7a).